Here is a 137-residue protein sequence, read N- to C-terminus: Acidic phospholipase A2 beta-bungarotoxin A6 chain (137 aa).

The N-terminal stretch at 1-9 is a signal peptide; it reads AVCVSLLGA. Positions 10-17 are excised as a propeptide; that stretch reads ANIPPQHL. Cystine bridges form between Cys44/Cys136, Cys46/Cys62, Cys61/Cys117, Cys68/Cys110, Cys78/Cys103, and Cys96/Cys108. Ca(2+) is bound by residues Tyr45, Gly47, and Gly49. Residue His65 is part of the active site. Asp66 contributes to the Ca(2+) binding site. Asp111 is a catalytic residue.

The protein belongs to the phospholipase A2 family. Group I subfamily. D49 sub-subfamily. Heterodimer; disulfide-linked. The A chains have phospholipase A2 activity and the B chains show homology with the basic protease inhibitors. Requires Ca(2+) as cofactor. In terms of tissue distribution, expressed by the venom gland.

It is found in the secreted. The enzyme catalyses a 1,2-diacyl-sn-glycero-3-phosphocholine + H2O = a 1-acyl-sn-glycero-3-phosphocholine + a fatty acid + H(+). In terms of biological role, snake venom phospholipase A2 (PLA2) that inhibits neuromuscular transmission by blocking acetylcholine release from the nerve termini. PLA2 catalyzes the calcium-dependent hydrolysis of the 2-acyl groups in 3-sn-phosphoglycerides. This Bungarus multicinctus (Many-banded krait) protein is Acidic phospholipase A2 beta-bungarotoxin A6 chain.